A 274-amino-acid polypeptide reads, in one-letter code: uncharacterized protein (274 aa).

This is an uncharacterized protein from Mycobacterium tuberculosis (strain ATCC 25618 / H37Rv).